A 96-amino-acid chain; its full sequence is Progonadoliberin-1 (96 aa).

An N-terminal signal peptide occupies residues 1-26; sequence MHRKMAVKTLSVWLLLVGTLVPQHCC. Pyrrolidone carboxylic acid is present on Gln-27. Residue Gly-36 is modified to Glycine amide.

The protein belongs to the GnRH family. As to expression, preoptic area of the brain.

Its subcellular location is the secreted. Stimulates the secretion of gonadotropins. This Verasper moseri (Barfin flounder) protein is Progonadoliberin-1 (gnrh1).